We begin with the raw amino-acid sequence, 308 residues long: Ribonuclease HIII (308 aa).

One can recognise an RNase H type-2 domain in the interval 88-304 (FHCIGSDEAG…RDKAIHLINQ (217 aa)). 3 residues coordinate a divalent metal cation: D94, E95, and D199.

Belongs to the RNase HII family. RnhC subfamily. Requires Mn(2+) as cofactor. Mg(2+) serves as cofactor.

The protein resides in the cytoplasm. The catalysed reaction is Endonucleolytic cleavage to 5'-phosphomonoester.. Its function is as follows. Endonuclease that specifically degrades the RNA of RNA-DNA hybrids. The sequence is that of Ribonuclease HIII from Staphylococcus epidermidis (strain ATCC 35984 / DSM 28319 / BCRC 17069 / CCUG 31568 / BM 3577 / RP62A).